The primary structure comprises 167 residues: MAESEAPIIEAGKVSKWLTDNGFDHEFLAPDHQGIEIIKGNRDFLIPLATALYAYGFNYLQCQCAYDAGPGEDLVSMYHLVKVSDDVEQPEEIRLKVFVPRDDPRLPSVYWIWKSADFQERESYDMYGIIYEGHPNLKRILMPEDWVGWPLRKDYISPEFYELQDAY.

The protein belongs to the complex I 30 kDa subunit family. As to quaternary structure, NDH-1 can be composed of about 15 different subunits; different subcomplexes with different compositions have been identified which probably have different functions.

Its subcellular location is the cellular thylakoid membrane. It catalyses the reaction a plastoquinone + NADH + (n+1) H(+)(in) = a plastoquinol + NAD(+) + n H(+)(out). It carries out the reaction a plastoquinone + NADPH + (n+1) H(+)(in) = a plastoquinol + NADP(+) + n H(+)(out). Its function is as follows. NDH-1 shuttles electrons from an unknown electron donor, via FMN and iron-sulfur (Fe-S) centers, to quinones in the respiratory and/or the photosynthetic chain. The immediate electron acceptor for the enzyme in this species is believed to be plastoquinone. Couples the redox reaction to proton translocation, and thus conserves the redox energy in a proton gradient. Cyanobacterial NDH-1 also plays a role in inorganic carbon-concentration. In Trichodesmium erythraeum (strain IMS101), this protein is NAD(P)H-quinone oxidoreductase subunit J.